Here is a 302-residue protein sequence, read N- to C-terminus: 33 kDa chaperonin (302 aa).

2 disulfide bridges follow: C234–C236 and C267–C270.

It belongs to the HSP33 family. Under oxidizing conditions two disulfide bonds are formed involving the reactive cysteines. Under reducing conditions zinc is bound to the reactive cysteines and the protein is inactive.

It is found in the cytoplasm. Functionally, redox regulated molecular chaperone. Protects both thermally unfolding and oxidatively damaged proteins from irreversible aggregation. Plays an important role in the bacterial defense system toward oxidative stress. The sequence is that of 33 kDa chaperonin from Neisseria meningitidis serogroup B (strain ATCC BAA-335 / MC58).